The chain runs to 1007 residues: Bifunctional glutamine synthetase adenylyltransferase/adenylyl-removing enzyme (1007 aa).

The tract at residues M1–L496 is adenylyl removase. The tract at residues N505 to A1007 is adenylyl transferase.

It belongs to the GlnE family. It depends on Mg(2+) as a cofactor.

It catalyses the reaction [glutamine synthetase]-O(4)-(5'-adenylyl)-L-tyrosine + phosphate = [glutamine synthetase]-L-tyrosine + ADP. The catalysed reaction is [glutamine synthetase]-L-tyrosine + ATP = [glutamine synthetase]-O(4)-(5'-adenylyl)-L-tyrosine + diphosphate. Functionally, involved in the regulation of glutamine synthetase GlnA, a key enzyme in the process to assimilate ammonia. When cellular nitrogen levels are high, the C-terminal adenylyl transferase (AT) inactivates GlnA by covalent transfer of an adenylyl group from ATP to specific tyrosine residue of GlnA, thus reducing its activity. Conversely, when nitrogen levels are low, the N-terminal adenylyl removase (AR) activates GlnA by removing the adenylyl group by phosphorolysis, increasing its activity. The regulatory region of GlnE binds the signal transduction protein PII (GlnB) which indicates the nitrogen status of the cell. This chain is Bifunctional glutamine synthetase adenylyltransferase/adenylyl-removing enzyme, found in Leifsonia xyli subsp. xyli (strain CTCB07).